A 513-amino-acid polypeptide reads, in one-letter code: Protein disulfide-isomerase (513 aa).

Residues Met-1 to Ala-25 form the signal peptide. Positions Glu-26–Gly-149 constitute a Thioredoxin 1 domain. Active-site nucleophile residues include Cys-67 and Cys-70. An intrachain disulfide couples Cys-67 to Cys-70. N-linked (GlcNAc...) asparagine glycosylation occurs at Asn-282. Positions Phe-369–Glu-488 constitute a Thioredoxin 2 domain. Active-site nucleophile residues include Cys-411 and Cys-414. The cysteines at positions 411 and 414 are disulfide-linked. Residues Gly-491 to Glu-507 show a composition bias toward low complexity. Positions Gly-491–Leu-513 are disordered. The Prevents secretion from ER motif lies at Lys-510–Leu-513.

It belongs to the protein disulfide isomerase family.

The protein localises to the endoplasmic reticulum lumen. It carries out the reaction Catalyzes the rearrangement of -S-S- bonds in proteins.. Participates in the folding of proteins containing disulfide bonds, may be involved in glycosylation, prolyl hydroxylation and triglyceride transfer. This is Protein disulfide-isomerase (PDI) from Hordeum vulgare (Barley).